The following is a 204-amino-acid chain: MDFLFNTNAQFFIAAYLIGAIPFGLLLAKKYAGVDVKSSGSGSIGATNVLRVVKQSNPALAKKLGAATLLLDALKGVLVLLFAYFYGVSEATLWGISVLAVLGHCYSPYLGFEGGKGVATGMGVMMFMLPLETIIALVVWALGAKFIRISSLSSLTALGALIVASFILHPDMAHAPVIIIGFVLLYKHIPNIIRLFKGEEKRVV.

The next 4 helical transmembrane spans lie at 8 to 28, 76 to 96, 122 to 142, and 166 to 186; these read NAQF…LLLA, GVLV…LWGI, MGVM…VWAL, and FILH…VLLY.

It belongs to the PlsY family. As to quaternary structure, probably interacts with PlsX.

It is found in the cell inner membrane. It carries out the reaction an acyl phosphate + sn-glycerol 3-phosphate = a 1-acyl-sn-glycero-3-phosphate + phosphate. It participates in lipid metabolism; phospholipid metabolism. In terms of biological role, catalyzes the transfer of an acyl group from acyl-phosphate (acyl-PO(4)) to glycerol-3-phosphate (G3P) to form lysophosphatidic acid (LPA). This enzyme utilizes acyl-phosphate as fatty acyl donor, but not acyl-CoA or acyl-ACP. This Sulfurimonas denitrificans (strain ATCC 33889 / DSM 1251) (Thiomicrospira denitrificans (strain ATCC 33889 / DSM 1251)) protein is Glycerol-3-phosphate acyltransferase.